The primary structure comprises 256 residues: GTP cyclohydrolase FolE2 (256 aa).

The protein belongs to the GTP cyclohydrolase IV family.

The enzyme catalyses GTP + H2O = 7,8-dihydroneopterin 3'-triphosphate + formate + H(+). It functions in the pathway cofactor biosynthesis; 7,8-dihydroneopterin triphosphate biosynthesis; 7,8-dihydroneopterin triphosphate from GTP: step 1/1. Its function is as follows. Converts GTP to 7,8-dihydroneopterin triphosphate. This is GTP cyclohydrolase FolE2 from Caldicellulosiruptor bescii (strain ATCC BAA-1888 / DSM 6725 / KCTC 15123 / Z-1320) (Anaerocellum thermophilum).